Reading from the N-terminus, the 144-residue chain is Putative sugar phosphate isomerase RC0402 (144 aa).

Position 12 (His-12) interacts with substrate. The Proton donor role is filled by His-101. Substrate is bound at residue Arg-135.

The protein belongs to the LacAB/RpiB family.

The sequence is that of Putative sugar phosphate isomerase RC0402 from Rickettsia conorii (strain ATCC VR-613 / Malish 7).